A 23-amino-acid polypeptide reads, in one-letter code: Paralytic peptide 1 (23 aa).

The cysteines at positions 7 and 19 are disulfide-linked.

Belongs to the GBP/PSP1/paralytic peptide family. As to expression, hemolymph.

Causes rapid, rigid paralysis when injected into Lepidopteran larvae. The physiological role may be to reduce hemolymph loss following injury and promote wound healing. This chain is Paralytic peptide 1, found in Spodoptera exigua (Beet armyworm).